Reading from the N-terminus, the 146-residue chain is MLAAALRRCTAAAAARGLLHPASAPSPAAAVCSIRCYSHGSHETDEEFDARWVTYFNKPDIDAWELRKGMNTLVGYDLVPEPKIIDAALRACRRLNDFASAVRILEVVKDKAGPHKEIYPYVIQELRPTLNELGISTPEELGLDKV.

The transit peptide at 1 to 37 (MLAAALRRCTAAAAARGLLHPASAPSPAAAVCSIRCY) directs the protein to the mitochondrion. The short motif at 2–16 (LAAALRRCTAAAAAR) is the SIFI-degron element. Residues K83 and K109 each carry the N6-acetyllysine modification. Residue T137 is modified to Phosphothreonine.

The protein belongs to the cytochrome c oxidase subunit 5A family. In terms of assembly, component of the cytochrome c oxidase (complex IV, CIV), a multisubunit enzyme composed of 14 subunits. The complex is composed of a catalytic core of 3 subunits MT-CO1, MT-CO2 and MT-CO3, encoded in the mitochondrial DNA, and 11 supernumerary subunits COX4I, COX5A, COX5B, COX6A, COX6B, COX6C, COX7A, COX7B, COX7C, COX8 and NDUFA4, which are encoded in the nuclear genome. The complex exists as a monomer or a dimer and forms supercomplexes (SCs) in the inner mitochondrial membrane with NADH-ubiquinone oxidoreductase (complex I, CI) and ubiquinol-cytochrome c oxidoreductase (cytochrome b-c1 complex, complex III, CIII), resulting in different assemblies (supercomplex SCI(1)III(2)IV(1) and megacomplex MCI(2)III(2)IV(2)). Interacts with AFG1L. Interacts with RAB5IF. Post-translationally, in response to mitochondrial stress, the precursor protein is ubiquitinated by the SIFI complex in the cytoplasm before mitochondrial import, leading to its degradation. Within the SIFI complex, UBR4 initiates ubiquitin chain that are further elongated or branched by KCMF1.

The protein resides in the mitochondrion inner membrane. The protein operates within energy metabolism; oxidative phosphorylation. Functionally, component of the cytochrome c oxidase, the last enzyme in the mitochondrial electron transport chain which drives oxidative phosphorylation. The respiratory chain contains 3 multisubunit complexes succinate dehydrogenase (complex II, CII), ubiquinol-cytochrome c oxidoreductase (cytochrome b-c1 complex, complex III, CIII) and cytochrome c oxidase (complex IV, CIV), that cooperate to transfer electrons derived from NADH and succinate to molecular oxygen, creating an electrochemical gradient over the inner membrane that drives transmembrane transport and the ATP synthase. Cytochrome c oxidase is the component of the respiratory chain that catalyzes the reduction of oxygen to water. Electrons originating from reduced cytochrome c in the intermembrane space (IMS) are transferred via the dinuclear copper A center (CU(A)) of subunit 2 and heme A of subunit 1 to the active site in subunit 1, a binuclear center (BNC) formed by heme A3 and copper B (CU(B)). The BNC reduces molecular oxygen to 2 water molecules using 4 electrons from cytochrome c in the IMS and 4 protons from the mitochondrial matrix. In Mus musculus (Mouse), this protein is Cytochrome c oxidase subunit 5A, mitochondrial (Cox5a).